Here is a 445-residue protein sequence, read N- to C-terminus: Secretin receptor (445 aa).

Residues 1–21 form the signal peptide; the sequence is MCPRPGPPLGLWLLLGFACAA. Topologically, residues 22 to 137 are extracellular; it reads HLVGAPPRLC…HERQHAYLLK (116 aa). Intrachain disulfides connect C44–C71, C62–C103, and C85–C119. N68, N96, N102, and N124 each carry an N-linked (GlcNAc...) asparagine glycan. Residues 138–163 form a helical membrane-spanning segment; the sequence is LKVMYTVGYSSSLVMLLVALGILCAF. The Cytoplasmic portion of the chain corresponds to 164 to 170; it reads RRLHCTR. The chain crosses the membrane as a helical span at residues 171-191; sequence NYIHMHLFLSFILRALSNFIK. Over 192–212 the chain is Extracellular; it reads DAVLFSSDDAIHCDAHRVGCK. Cysteines 211 and 281 form a disulfide. The helical transmembrane segment at 213-235 threads the bilayer; it reads LVMVFFQYCIMANYAWLLVEGLY. Residues 236-250 are Cytoplasmic-facing; sequence LHSLLVVSFFSERKC. The helical transmembrane segment at 251 to 272 threads the bilayer; that stretch reads LQGFVVLGWGSPAMFVTSWAVT. Residues 273–287 lie on the Extracellular side of the membrane; the sequence is RHFLEDSGCWDINAN. Residues 288 to 311 traverse the membrane as a helical segment; that stretch reads AAIWWVIRGPVILSILINFILFIN. The Cytoplasmic portion of the chain corresponds to 312–336; it reads ILRILTRKLRTQETRGQDMNHYKRL. Residues 337 to 352 traverse the membrane as a helical segment; the sequence is ARSTLLLIPLFGVHYI. Residues 353 to 363 lie on the Extracellular side of the membrane; it reads VFVFSPEGAME. The helical transmembrane segment at 364-387 threads the bilayer; it reads IQLFFELALGSFQGLVVAVLYCFL. Residues 388 to 445 lie on the Cytoplasmic side of the membrane; that stretch reads NGEVQLEVQKKWQQWHLWEPPLCPVALSSSFSNGTSSLNSTKACPSGRSRDTCKVSII.

This sequence belongs to the G-protein coupled receptor 2 family. Post-translationally, phosphorylated on Ser and Thr residues at the cytoplasmic C-terminus by G protein-coupled receptor kinases (GRKs).

Its subcellular location is the cell membrane. It localises to the basolateral cell membrane. G protein-coupled receptor activated by secretin (SCT), which is involved in different processes such as regulation of the pH of the duodenal content, food intake and water homeostasis. Ligand binding causes a conformation change that triggers signaling via guanine nucleotide-binding proteins (G proteins) and activates cAMP-dependent pathway. Upon binding to secretin, regulates the pH of the duodenum by (1) inhibiting the secretion of gastric acid from the parietal cells of the stomach and (2) stimulating the production of bicarbonate (NaHCO(3)) from the ductal cells of the pancreas. In addition to regulating the pH of the duodenal content, plays a central role in diet induced thermogenesis: acts as a non-sympathetic brown fat (BAT) activator mediating prandial thermogenesis, which consequentially induces satiation. Mechanistically, secretin released by the gut after a meal binds to secretin receptor (SCTR) in brown adipocytes, activating brown fat thermogenesis by stimulating lipolysis, which is sensed in the brain and promotes satiation. Also able to stimulate lipolysis in white adipocytes. Also plays an important role in cellular osmoregulation by regulating renal water reabsorption. Also plays a role in the central nervous system: required for synaptic plasticity. This Oryctolagus cuniculus (Rabbit) protein is Secretin receptor (SCTR).